A 429-amino-acid chain; its full sequence is Cleavage stimulation factor subunit 50 (429 aa).

The segment at 20–41 (LNALIVAHLRHHNLSQVASAVA) is hydrophobic. WD repeat units follow at residues 121–160 (EHKSVVRCARFSPDGMFFATGGADTSIKLFEVPKVKQMIS), 174–213 (DHAEPINDLDFHPRSTILISSAKDNCIKFFDFSKTTAKRA), 218–257 (QDTHNVRSISFHPSGEFLLAGTDHPIPHLYDVNTYQCFLP), 264–303 (GVSGAINQVRYSSTGSIYITASKDGAIRLFDGVSAKCVRS), 308–347 (HGKSEVTSAVFTKDQRFVLSSGKDSTVKLWEIGSGRMVKE), 351–392 (AKRV…KVAK), and 396–429 (NHNGAPRWIEHSPVESVFVTCGIDRSIRFWKESV).

As to quaternary structure, homodimer. Belongs to the CSTF complex. Forms a complex with cleavage and polyadenylation specificity factor (CPSF) subunits CSTF64, PABN3, CPSF30, FIPS5 and CPSF100.

The protein localises to the nucleus. Functionally, one of the multiple factors required for polyadenylation and 3'-end cleavage of pre-mRNAs. May be responsible for the interaction of CSTF with other factors to form a stable complex on the pre-mRNA. The sequence is that of Cleavage stimulation factor subunit 50 from Arabidopsis thaliana (Mouse-ear cress).